Here is a 151-residue protein sequence, read N- to C-terminus: Caveolin-3 (151 aa).

Residues 1–83 (MMAEEHTDLE…RLLSTLLGVP (83 aa)) are Cytoplasmic-facing. Lys-38 is covalently cross-linked (Glycyl lysine isopeptide (Lys-Gly) (interchain with G-Cter in SUMO3)). Residues 64 to 114 (TFTVSKYWCYRLLSTLLGVPLALLWGFLFACISFCHIWAVVPCIKSYLIEI) form a required for interaction with DAG1 region. Residues 84–104 (LALLWGFLFACISFCHIWAVV) constitute an intramembrane region (helical). Over 105 to 151 (PCIKSYLIEIQCISHIYSLCIRTFCNPLFAALGQVCSSIKVVLRKEV) the chain is Cytoplasmic.

It belongs to the caveolin family. In terms of assembly, homooligomer. Interacts with DLG1 and KCNA5; forms a ternary complex. Interacts with TRIM72. Interacts with MUSK; may regulate MUSK signaling. Interacts with DAG1 (via its C-terminal); the interaction prevents binding of DAG1 with DMD. Interacts with DYSF. Interacts with POPDC1. Interacts with CAVIN1 and CAVIN2. Interacts with CAVIN4. Sumoylation with SUMO3 by PIAS4 may reduce agonist-induced internalization and desensitization of adrenergic receptor ABRD2. Expressed predominantly in muscle.

The protein resides in the golgi apparatus membrane. The protein localises to the cell membrane. It localises to the membrane. It is found in the caveola. Its subcellular location is the sarcolemma. Its function is as follows. May act as a scaffolding protein within caveolar membranes. Interacts directly with G-protein alpha subunits and can functionally regulate their activity. May also regulate voltage-gated potassium channels. Plays a role in the sarcolemma repair mechanism of both skeletal muscle and cardiomyocytes that permits rapid resealing of membranes disrupted by mechanical stress. Mediates the recruitment of CAVIN2 and CAVIN3 proteins to the caveolae. This Homo sapiens (Human) protein is Caveolin-3 (CAV3).